Here is a 235-residue protein sequence, read N- to C-terminus: Calcium-activated potassium channel subunit beta-2 (235 aa).

The segment at 1–45 (MFIWTSGRTSSSYRQDEKRNIYQKIRDHDLLDKRKTVTALKAGED) is ball and chain. Residues 1 to 46 (MFIWTSGRTSSSYRQDEKRNIYQKIRDHDLLDKRKTVTALKAGEDR) are Cytoplasmic-facing. A helical transmembrane segment spans residues 47-67 (AILLGLAMMVCSIMMYFLLGI). The Extracellular segment spans residues 68–194 (TLLRSYMQSV…VILTKLYSSN (127 aa)). N-linked (GlcNAc...) asparagine glycans are attached at residues N88, N96, and N119. The chain crosses the membrane as a helical span at residues 195-215 (VLFHSLFWPTCMMAGGVAIVA). Topologically, residues 216–235 (MVKLTQYLSLLCERIQRINR) are cytoplasmic.

The protein belongs to the KCNMB (TC 8.A.14.1) family. KCNMB2 subfamily. As to quaternary structure, interacts with KCNMA1 tetramer. There are probably 4 molecules of KCMNB2 per KCNMA1 tetramer. N-glycosylated.

Its subcellular location is the membrane. Functionally, regulatory subunit of the calcium activated potassium KCNMA1 (maxiK) channel. Modulates the calcium sensitivity and gating kinetics of KCNMA1, thereby contributing to KCNMA1 channel diversity. Acts as a negative regulator that confers rapid and complete inactivation of KCNMA1 channel complex. The chain is Calcium-activated potassium channel subunit beta-2 (Kcnmb2) from Mus musculus (Mouse).